A 550-amino-acid chain; its full sequence is Sterol O-acyltransferase 1 (550 aa).

Met-1 bears the N-acetylmethionine mark. The segment at 1–36 is disordered; the sequence is MVGEEKMSLRNRLSKSRENPEEDEDQRKPAKESLEA. At 1 to 138 the chain is on the cytoplasmic side; that stretch reads MVGEEKMSLR…LDELLEVDHI (138 aa). Position 8 is a phosphoserine (Ser-8). Residues 15–34 show a composition bias toward basic and acidic residues; that stretch reads KSRENPEEDEDQRKPAKESL. His-137 is a binding site for cholesterol. A helical transmembrane segment spans residues 139-160; that stretch reads RTIYHMFIALLILFILSTLVVD. Topologically, residues 161–180 are lumenal; sequence YIDEGRLVLEFSLLSYAFGK. A helical membrane pass occupies residues 181-206; it reads FPTVVWTWWIMFLSTFSVPYFLFQRW. Residues 207–218 are Cytoplasmic-facing; that stretch reads ATGYSKSSHPLI. The helical transmembrane segment at 219–244 threads the bilayer; that stretch reads NSLFHGFLFMVFQIGILGFGPTYVVL. At 245-252 the chain is on the lumenal side; it reads AYTLPPAS. A helical transmembrane segment spans residues 253-276; it reads RFIIIFEQIRFVMKAHSFVRENVP. The Cytoplasmic segment spans residues 277-319; that stretch reads RVLNSAKEKSSTVPIPTVNQYLYFLFAPTLIYRDSYPRNPTVR. Residues 320–352 traverse the membrane as a helical segment; the sequence is WGYVAMQFAQVFGCFFYVYYIFERLCAPLFRNI. Over 353 to 369 the chain is Lumenal; that stretch reads KQEPFSARVLVLCVFNS. The helical transmembrane segment at 370–395 threads the bilayer; it reads ILPGVLILFLTFFAFLHCWLNAFAEM. Residues 396–443 lie on the Cytoplasmic side of the membrane; sequence LRFGDRMFYKDWWNSTSYSNYYRTWNVVVHDWLYYYAYKDFLWFFSKR. An FYXDWWN motif motif is present at residues 403–409; that stretch reads FYKDWWN. An acyl-CoA-binding residues include Asn-415, Arg-418, Asn-421, His-425, Tyr-433, Lys-445, and Ser-456. Residues 444–468 form a helical membrane-spanning segment; it reads FKSAAMLAAFAVSAVVHEYALAVCL. Residue His-460 is part of the active site. The Lumenal segment spans residues 469 to 474; it reads SFFYPV. The chain crosses the membrane as a helical span at residues 475–490; sequence LFVLFMFFGMAFNFIV. At 491-496 the chain is on the cytoplasmic side; sequence NDSRKK. The helical transmembrane segment at 497–528 threads the bilayer; the sequence is PIWNVMMWTSLFLGNGVLLCFYSQEWYARQHC. A disulfide bridge connects residues Cys-528 and Cys-546. The Lumenal segment spans residues 529 to 550; that stretch reads PLKNPTFLDYVRPRSWTCRYVF.

The protein belongs to the membrane-bound acyltransferase family. Sterol o-acyltransferase subfamily. As to quaternary structure, may form homo- or heterodimers. Interacts with UBIAD1. Expressed in most tissues, but most strongly in the adrenal gland. Expressed more strongly in liver Kupffer cells than in hepatocytes.

The protein resides in the endoplasmic reticulum membrane. It catalyses the reaction a sterol + a long-chain fatty acyl-CoA = a long-chain 3-hydroxysterol ester + CoA. The enzyme catalyses cholesterol + an acyl-CoA = a cholesterol ester + CoA. It carries out the reaction cholesterol + (9Z)-octadecenoyl-CoA = cholesteryl (9Z-octadecenoate) + CoA. The catalysed reaction is cholesterol + hexadecanoyl-CoA = cholesteryl hexadecanoate + CoA. It catalyses the reaction octadecanoyl-CoA + cholesterol = cholesteryl octadecanoate + CoA. The enzyme catalyses (9Z,12Z)-octadecadienoyl-CoA + cholesterol = cholesteryl (9Z,12Z)-octadecadienoate + CoA. It carries out the reaction (5Z,8Z,11Z,14Z)-eicosatetraenoyl-CoA + cholesterol = cholesteryl (5Z,8Z,11Z,14Z)-eicosatetraenoate + CoA. The catalysed reaction is (9Z)-hexadecenoyl-CoA + cholesterol = cholesteryl (9Z)-hexadecenoate + CoA. It catalyses the reaction (11Z)-octadecenoyl-CoA + cholesterol = cholesteryl (11Z)-octadecenoate + CoA. The enzyme catalyses (7Z)-octadecenoyl-CoA + cholesterol = cholesteryl (7Z)-octadecenoate + CoA. Catalyzes the formation of fatty acid-cholesterol esters, which are less soluble in membranes than cholesterol. Plays a role in lipoprotein assembly and dietary cholesterol absorption. Preferentially utilizes oleoyl-CoA ((9Z)-octadecenoyl-CoA) as a substrate: shows a higher activity towards an acyl-CoA substrate with a double bond at the delta-9 position (9Z) than towards saturated acyl-CoA or an unsaturated acyl-CoA with a double bond at the delta-7 (7Z) or delta-11 (11Z) positions. The protein is Sterol O-acyltransferase 1 (SOAT1) of Macaca fascicularis (Crab-eating macaque).